Here is a 205-residue protein sequence, read N- to C-terminus: Adenylate kinase (205 aa).

Residue 10 to 15 coordinates ATP; sequence GAGKGT. The interval 30 to 59 is NMP; the sequence is STGDMLRAAVAQGSEVGKVAEGIMARGELV. AMP-binding positions include threonine 31, arginine 36, 57 to 59, 85 to 88, and glutamine 92; these read ELV and GFPR. The LID stretch occupies residues 126 to 139; it reads TRAAETAGGPRADD. Arginine 127 serves as a coordination point for ATP. AMP-binding residues include arginine 136 and arginine 147. Lysine 175 provides a ligand contact to ATP.

It belongs to the adenylate kinase family. In terms of assembly, monomer.

It localises to the cytoplasm. The enzyme catalyses AMP + ATP = 2 ADP. It participates in purine metabolism; AMP biosynthesis via salvage pathway; AMP from ADP: step 1/1. Catalyzes the reversible transfer of the terminal phosphate group between ATP and AMP. Plays an important role in cellular energy homeostasis and in adenine nucleotide metabolism. This Parvibaculum lavamentivorans (strain DS-1 / DSM 13023 / NCIMB 13966) protein is Adenylate kinase.